The sequence spans 399 residues: uncharacterized protein (399 aa).

Residues 197–206 (ENSSASSVTS) are compositionally biased toward polar residues. A disordered region spans residues 197–224 (ENSSASSVTSEECEQDVMDEQSAEDNEE). A compositionally biased stretch (acidic residues) spans 207–224 (EECEQDVMDEQSAEDNEE).

This is an uncharacterized protein from Diadromus pulchellus (Parasitic wasp).